A 285-amino-acid chain; its full sequence is DegV domain-containing protein CA_C3284 (285 aa).

A DegV domain is found at 3 to 280; that stretch reads VKILTDSTSC…PGAIGIAYYT (278 aa). The hexadecanoate site is built by serine 59 and serine 91.

Its function is as follows. May bind long-chain fatty acids, such as palmitate, and may play a role in lipid transport or fatty acid metabolism. The protein is DegV domain-containing protein CA_C3284 of Clostridium acetobutylicum (strain ATCC 824 / DSM 792 / JCM 1419 / IAM 19013 / LMG 5710 / NBRC 13948 / NRRL B-527 / VKM B-1787 / 2291 / W).